Here is a 247-residue protein sequence, read N- to C-terminus: NADH-ubiquinone oxidoreductase chain 6 (247 aa).

A run of 5 helical transmembrane segments spans residues 18-38 (TMIL…VVRA), 44-64 (SVLF…LLGL), 70-90 (ISPV…VMMF), 104-124 (YLPV…FILD), and 168-188 (VWFL…IVLT).

The protein belongs to the complex I subunit 6 family.

The protein resides in the mitochondrion membrane. It carries out the reaction a ubiquinone + NADH + 5 H(+)(in) = a ubiquinol + NAD(+) + 4 H(+)(out). Functionally, core subunit of the mitochondrial membrane respiratory chain NADH dehydrogenase (Complex I) that is believed to belong to the minimal assembly required for catalysis. Complex I functions in the transfer of electrons from NADH to the respiratory chain. The immediate electron acceptor for the enzyme is believed to be ubiquinone. This Triticum aestivum (Wheat) protein is NADH-ubiquinone oxidoreductase chain 6 (ND6).